Reading from the N-terminus, the 223-residue chain is Cytidylate kinase (223 aa).

12–20 (GPAGSGKST) contacts ATP.

This sequence belongs to the cytidylate kinase family. Type 1 subfamily.

The protein resides in the cytoplasm. It catalyses the reaction CMP + ATP = CDP + ADP. It carries out the reaction dCMP + ATP = dCDP + ADP. This Aster yellows witches'-broom phytoplasma (strain AYWB) protein is Cytidylate kinase.